The sequence spans 254 residues: Keratin-associated protein 24-1 (254 aa).

Repeat copies occupy residues 193–202 (YISNSCQPQS), 203–212 (YLVRNYHYSS), 213–222 (YRPTSCRPLS), 223–232 (YLSRSFRSLS), 233–242 (YIPSTFPPLR), and 243–252 (YLCSGSRPLK). The segment at 193–252 (YISNSCQPQSYLVRNYHYSSYRPTSCRPLSYLSRSFRSLSYIPSTFPPLRYLCSGSRPLK) is 6 X 10 AA repeats of Y-[ILR]-[SVPC]-[NRTS]-[SNTG]-X-[QHRP]-[PSY]-[QSL]-[SRK].

Belongs to the PMG family. As to quaternary structure, interacts with hair keratins. In terms of tissue distribution, specific expression in the middle/upper hair cuticle.

In the hair cortex, hair keratin intermediate filaments are embedded in an interfilamentous matrix, consisting of hair keratin-associated proteins (KRTAP), which are essential for the formation of a rigid and resistant hair shaft through their extensive disulfide bond cross-linking with abundant cysteine residues of hair keratins. The matrix proteins include the high-sulfur and high-glycine-tyrosine keratins. The sequence is that of Keratin-associated protein 24-1 (KRTAP24-1) from Homo sapiens (Human).